The primary structure comprises 89 residues: MAKKSKIAKFKKQQKLVAQYQELRQELKKEKNYEALRKLPKDSHPNRMKMRDRIDGRPRAYMRKFGMSRVNFRKLAHEGKIPGVKKSSW.

Belongs to the universal ribosomal protein uS14 family. In terms of assembly, part of the 30S ribosomal subunit. Contacts proteins S3 and S10.

Binds 16S rRNA, required for the assembly of 30S particles and may also be responsible for determining the conformation of the 16S rRNA at the A site. The protein is Small ribosomal subunit protein uS14A of Lactococcus lactis subsp. lactis (strain IL1403) (Streptococcus lactis).